The chain runs to 185 residues: Small ribosomal subunit protein uS4 (185 aa).

Positions 108–170 (RRLQTLVYRK…GKSPFVDASH (63 aa)) constitute an S4 RNA-binding domain.

This sequence belongs to the universal ribosomal protein uS4 family. As to quaternary structure, part of the 30S ribosomal subunit. Contacts protein S5. The interaction surface between S4 and S5 is involved in control of translational fidelity.

Functionally, one of the primary rRNA binding proteins, it binds directly to 16S rRNA where it nucleates assembly of the body of the 30S subunit. With S5 and S12 plays an important role in translational accuracy. The protein is Small ribosomal subunit protein uS4 of Methanoregula boonei (strain DSM 21154 / JCM 14090 / 6A8).